Consider the following 419-residue polypeptide: Gamma-glutamyl phosphate reductase (419 aa).

Belongs to the gamma-glutamyl phosphate reductase family.

It is found in the cytoplasm. It carries out the reaction L-glutamate 5-semialdehyde + phosphate + NADP(+) = L-glutamyl 5-phosphate + NADPH + H(+). Its pathway is amino-acid biosynthesis; L-proline biosynthesis; L-glutamate 5-semialdehyde from L-glutamate: step 2/2. In terms of biological role, catalyzes the NADPH-dependent reduction of L-glutamate 5-phosphate into L-glutamate 5-semialdehyde and phosphate. The product spontaneously undergoes cyclization to form 1-pyrroline-5-carboxylate. The chain is Gamma-glutamyl phosphate reductase from Caulobacter sp. (strain K31).